A 286-amino-acid chain; its full sequence is Shikimate dehydrogenase (NADP(+)) (286 aa).

Residues 20–22 (SLS) and Thr67 contribute to the shikimate site. Lys71 acts as the Proton acceptor in catalysis. Shikimate is bound by residues Asn92 and Asp107. Residues 132-136 (GAGGA) and Met228 each bind NADP(+). Tyr230 is a binding site for shikimate. Gly251 is an NADP(+) binding site.

The protein belongs to the shikimate dehydrogenase family. As to quaternary structure, homodimer.

The enzyme catalyses shikimate + NADP(+) = 3-dehydroshikimate + NADPH + H(+). Its pathway is metabolic intermediate biosynthesis; chorismate biosynthesis; chorismate from D-erythrose 4-phosphate and phosphoenolpyruvate: step 4/7. Involved in the biosynthesis of the chorismate, which leads to the biosynthesis of aromatic amino acids. Catalyzes the reversible NADPH linked reduction of 3-dehydroshikimate (DHSA) to yield shikimate (SA). This chain is Shikimate dehydrogenase (NADP(+)), found in Geobacter metallireducens (strain ATCC 53774 / DSM 7210 / GS-15).